The sequence spans 506 residues: Trans-cinnamate 4-monooxygenase C4H1 (506 aa).

2 consecutive short sequence motifs (nuclear localization signal) follow at residues 161 to 168 and 247 to 254; these read VKKMPESA and QRRLQLFK. Residue Cys448 coordinates heme.

This sequence belongs to the cytochrome P450 family. The cofactor is heme.

Its subcellular location is the nucleus. It catalyses the reaction (E)-cinnamate + reduced [NADPH--hemoprotein reductase] + O2 = (E)-4-coumarate + oxidized [NADPH--hemoprotein reductase] + H2O + H(+). The protein operates within phenylpropanoid metabolism; trans-4-coumarate biosynthesis; trans-4-coumarate from trans-cinnamate: step 1/1. Its function is as follows. Component of the floral volatile benzenoid/phenylpropanoid (FVBP) biosynthetic pathway that controls carbon flux to pigments essential for pollination or UV protection, to numerous pytoalexins synthesized by plants when challenged by pathogens, and to lignins. In Petunia hybrida (Petunia), this protein is Trans-cinnamate 4-monooxygenase C4H1.